A 71-amino-acid chain; its full sequence is Small ribosomal subunit protein bS21 (71 aa).

Residues 48 to 59 (KAAAAVKRHAKK) show a composition bias toward basic residues. Residues 48–71 (KAAAAVKRHAKKVQRENRKFQRLY) are disordered. Residues 60–71 (VQRENRKFQRLY) show a composition bias toward basic and acidic residues.

The protein belongs to the bacterial ribosomal protein bS21 family.

The chain is Small ribosomal subunit protein bS21 from Saccharophagus degradans (strain 2-40 / ATCC 43961 / DSM 17024).